A 572-amino-acid chain; its full sequence is NADP-dependent malic enzyme (572 aa).

Methionine 1 carries the N-acetylmethionine modification. Catalysis depends on tyrosine 102, which acts as the Proton donor. Arginine 155 contacts NADP(+). Lysine 173 acts as the Proton acceptor in catalysis. Residues glutamate 245, aspartate 246, and aspartate 269 each coordinate a divalent metal cation. NADP(+)-binding positions include aspartate 269 and 301–318 (GAGE…MALE). The residue at position 336 (serine 336) is a Phosphoserine. An NADP(+)-binding site is contributed by asparagine 408.

It belongs to the malic enzymes family. Homotetramer. Mg(2+) is required as a cofactor. Mn(2+) serves as cofactor. Expressed in all tissues tested including liver, placenta and white adipose tissue.

The protein resides in the cytoplasm. It catalyses the reaction (S)-malate + NADP(+) = pyruvate + CO2 + NADPH. The catalysed reaction is oxaloacetate + H(+) = pyruvate + CO2. Catalyzes the oxidative decarboxylation of (S)-malate in the presence of NADP(+) and divalent metal ions, and decarboxylation of oxaloacetate. The polypeptide is NADP-dependent malic enzyme (Homo sapiens (Human)).